The sequence spans 1050 residues: Bifunctional glutamine synthetase adenylyltransferase/adenylyl-removing enzyme (1050 aa).

Positions 1–531 are adenylyl removase; that stretch reads MTDPLIHTRK…LHSQLFYRPL (531 aa). The segment at 537–1050 is adenylyl transferase; the sequence is NLSVDAMKLS…LDSVEARREL (514 aa).

The protein belongs to the GlnE family. The cofactor is Mg(2+).

It carries out the reaction [glutamine synthetase]-O(4)-(5'-adenylyl)-L-tyrosine + phosphate = [glutamine synthetase]-L-tyrosine + ADP. The catalysed reaction is [glutamine synthetase]-L-tyrosine + ATP = [glutamine synthetase]-O(4)-(5'-adenylyl)-L-tyrosine + diphosphate. Its function is as follows. Involved in the regulation of glutamine synthetase GlnA, a key enzyme in the process to assimilate ammonia. When cellular nitrogen levels are high, the C-terminal adenylyl transferase (AT) inactivates GlnA by covalent transfer of an adenylyl group from ATP to specific tyrosine residue of GlnA, thus reducing its activity. Conversely, when nitrogen levels are low, the N-terminal adenylyl removase (AR) activates GlnA by removing the adenylyl group by phosphorolysis, increasing its activity. The regulatory region of GlnE binds the signal transduction protein PII (GlnB) which indicates the nitrogen status of the cell. This Corynebacterium efficiens (strain DSM 44549 / YS-314 / AJ 12310 / JCM 11189 / NBRC 100395) protein is Bifunctional glutamine synthetase adenylyltransferase/adenylyl-removing enzyme.